A 448-amino-acid chain; its full sequence is Trigger factor (448 aa).

Positions 172–257 (GDRVTVDFVG…MKKIEWPHLP (86 aa)) constitute a PPIase FKBP-type domain.

Belongs to the FKBP-type PPIase family. Tig subfamily.

Its subcellular location is the cytoplasm. It catalyses the reaction [protein]-peptidylproline (omega=180) = [protein]-peptidylproline (omega=0). Its function is as follows. Involved in protein export. Acts as a chaperone by maintaining the newly synthesized protein in an open conformation. Functions as a peptidyl-prolyl cis-trans isomerase. The protein is Trigger factor of Paraburkholderia phymatum (strain DSM 17167 / CIP 108236 / LMG 21445 / STM815) (Burkholderia phymatum).